The sequence spans 368 residues: Isopentenyl-diphosphate delta-isomerase (368 aa).

7 to 8 contacts substrate; it reads RK. FMN contacts are provided by residues Thr-65, 66-68, Ser-96, and Asn-125; that span reads GMT. 96–98 is a binding site for substrate; that stretch reads SQR. Residue Gln-160 coordinates substrate. Glu-161 lines the Mg(2+) pocket. FMN is bound by residues Lys-193, Ser-218, Thr-223, 275–277, and 296–297; these read GIR and AL.

It belongs to the IPP isomerase type 2 family. Homooctamer. Dimer of tetramers. The cofactor is FMN. It depends on NADPH as a cofactor. Mg(2+) is required as a cofactor.

Its subcellular location is the cytoplasm. The enzyme catalyses isopentenyl diphosphate = dimethylallyl diphosphate. Its function is as follows. Involved in the biosynthesis of isoprenoids. Catalyzes the 1,3-allylic rearrangement of the homoallylic substrate isopentenyl (IPP) to its allylic isomer, dimethylallyl diphosphate (DMAPP). The chain is Isopentenyl-diphosphate delta-isomerase from Saccharolobus shibatae (strain ATCC 51178 / DSM 5389 / JCM 8931 / NBRC 15437 / B12) (Sulfolobus shibatae).